The chain runs to 242 residues: Small ribosomal subunit protein uS2 (242 aa).

It belongs to the universal ribosomal protein uS2 family.

The protein is Small ribosomal subunit protein uS2 of Pseudoalteromonas translucida (strain TAC 125).